The following is a 230-amino-acid chain: Cytidylate kinase (230 aa).

Residue 14 to 22 (GPSGVGKSS) participates in ATP binding.

The protein belongs to the cytidylate kinase family. Type 1 subfamily.

Its subcellular location is the cytoplasm. It catalyses the reaction CMP + ATP = CDP + ADP. It carries out the reaction dCMP + ATP = dCDP + ADP. This Buchnera aphidicola subsp. Baizongia pistaciae (strain Bp) protein is Cytidylate kinase.